Consider the following 281-residue polypeptide: 39kDa core protein OPG130 (281 aa).

Residues 1-22 are compositionally biased toward polar residues; the sequence is MDFFNKFSQGLAESSTPKSSIY. Disordered stretches follow at residues 1 to 33, 91 to 112, and 149 to 192; these read MDFF…DTKK, ILLP…TSSD, and NKDQ…PQPP. Residues 24–33 are compositionally biased toward basic and acidic residues; it reads SEEKDPDTKK. Residues 94 to 112 are compositionally biased toward polar residues; the sequence is PSSTAPTPKPRQQTNTSSD. Over residues 154–175 the composition is skewed to low complexity; sequence TTTPPSTQPSQTLPTTTCTQQS.

This sequence belongs to the orthopoxvirus OPG130 family. As to quaternary structure, interacts with OPG136 and its cleaved form. Post-translationally, its phosphorylation state is regulated by the OPG054 kinase and the OPG106 phosphatase.

Its subcellular location is the virion. The protein resides in the host endoplasmic reticulum-Golgi intermediate compartment membrane. Functionally, component of the virion core. Participates in virion assembly. This is 39kDa core protein OPG130 (OPG130) from Vaccinia virus (strain Copenhagen) (VACV).